A 216-amino-acid chain; its full sequence is Phosphoribosylformylglycinamidine synthase subunit PurQ (216 aa).

In terms of domain architecture, Glutamine amidotransferase type-1 spans 2-216 (SIGVIVFPGS…GRRMLEALLG (215 aa)). Residue Cys86 is the Nucleophile of the active site. Catalysis depends on residues His193 and Glu195.

As to quaternary structure, part of the FGAM synthase complex composed of 1 PurL, 1 PurQ and 2 PurS subunits.

It localises to the cytoplasm. The catalysed reaction is N(2)-formyl-N(1)-(5-phospho-beta-D-ribosyl)glycinamide + L-glutamine + ATP + H2O = 2-formamido-N(1)-(5-O-phospho-beta-D-ribosyl)acetamidine + L-glutamate + ADP + phosphate + H(+). The enzyme catalyses L-glutamine + H2O = L-glutamate + NH4(+). It participates in purine metabolism; IMP biosynthesis via de novo pathway; 5-amino-1-(5-phospho-D-ribosyl)imidazole from N(2)-formyl-N(1)-(5-phospho-D-ribosyl)glycinamide: step 1/2. Functionally, part of the phosphoribosylformylglycinamidine synthase complex involved in the purines biosynthetic pathway. Catalyzes the ATP-dependent conversion of formylglycinamide ribonucleotide (FGAR) and glutamine to yield formylglycinamidine ribonucleotide (FGAM) and glutamate. The FGAM synthase complex is composed of three subunits. PurQ produces an ammonia molecule by converting glutamine to glutamate. PurL transfers the ammonia molecule to FGAR to form FGAM in an ATP-dependent manner. PurS interacts with PurQ and PurL and is thought to assist in the transfer of the ammonia molecule from PurQ to PurL. In Synechococcus sp. (strain CC9605), this protein is Phosphoribosylformylglycinamidine synthase subunit PurQ.